The sequence spans 277 residues: Shikimate dehydrogenase (NADP(+)) (277 aa).

Shikimate-binding positions include 18–20 and threonine 65; that span reads SKS. Catalysis depends on lysine 69, which acts as the Proton acceptor. Glutamate 81 contributes to the NADP(+) binding site. Asparagine 90 and aspartate 106 together coordinate shikimate. NADP(+)-binding positions include 130 to 134, 154 to 159, and methionine 217; these read GAGGA and NRTFSK. Tyrosine 219 contacts shikimate. Glycine 241 is an NADP(+) binding site.

The protein belongs to the shikimate dehydrogenase family. Homodimer.

The catalysed reaction is shikimate + NADP(+) = 3-dehydroshikimate + NADPH + H(+). Its pathway is metabolic intermediate biosynthesis; chorismate biosynthesis; chorismate from D-erythrose 4-phosphate and phosphoenolpyruvate: step 4/7. Functionally, involved in the biosynthesis of the chorismate, which leads to the biosynthesis of aromatic amino acids. Catalyzes the reversible NADPH linked reduction of 3-dehydroshikimate (DHSA) to yield shikimate (SA). The chain is Shikimate dehydrogenase (NADP(+)) from Vibrio campbellii (strain ATCC BAA-1116).